A 237-amino-acid polypeptide reads, in one-letter code: U2 small nuclear ribonucleoprotein A' (237 aa).

LRR repeat units follow at residues 53–74, 75–95, and 97–118; these read RTNI…GHND, TVHT…SRLP, and YLVN…QGLR. In terms of domain architecture, LRRCT spans 132–170; it reads NVICHKEQYRETVIALCPQLAVLDGERVRQAERQAAPQN. A disordered region spans residues 161 to 182; the sequence is QAERQAAPQNEKTDTPTEGPQP.

Belongs to the U2 small nuclear ribonucleoprotein A family. As to quaternary structure, associated with the spliceosome.

The protein localises to the nucleus. Functionally, involved in pre-mRNA splicing. The protein is U2 small nuclear ribonucleoprotein A' (LEA1) of Eremothecium gossypii (strain ATCC 10895 / CBS 109.51 / FGSC 9923 / NRRL Y-1056) (Yeast).